We begin with the raw amino-acid sequence, 884 residues long: Valine--tRNA ligase (884 aa).

The short motif at 43 to 53 (PNVTGSLHIGH) is the 'HIGH' region element. Positions 530 to 534 (KMSKS) match the 'KMSKS' region motif. Lys533 provides a ligand contact to ATP. Residues 817–884 (VIDLDAERGR…KLKAALERLM (68 aa)) are a coiled coil.

Belongs to the class-I aminoacyl-tRNA synthetase family. ValS type 1 subfamily. As to quaternary structure, monomer.

It is found in the cytoplasm. It catalyses the reaction tRNA(Val) + L-valine + ATP = L-valyl-tRNA(Val) + AMP + diphosphate. Catalyzes the attachment of valine to tRNA(Val). As ValRS can inadvertently accommodate and process structurally similar amino acids such as threonine, to avoid such errors, it has a 'posttransfer' editing activity that hydrolyzes mischarged Thr-tRNA(Val) in a tRNA-dependent manner. The sequence is that of Valine--tRNA ligase from Zymomonas mobilis subsp. mobilis (strain ATCC 31821 / ZM4 / CP4).